We begin with the raw amino-acid sequence, 339 residues long: Tetraacyldisaccharide 4'-kinase (339 aa).

Residue 58–65 (TVGGSGKT) coordinates ATP.

The protein belongs to the LpxK family.

The catalysed reaction is a lipid A disaccharide + ATP = a lipid IVA + ADP + H(+). It functions in the pathway glycolipid biosynthesis; lipid IV(A) biosynthesis; lipid IV(A) from (3R)-3-hydroxytetradecanoyl-[acyl-carrier-protein] and UDP-N-acetyl-alpha-D-glucosamine: step 6/6. Its function is as follows. Transfers the gamma-phosphate of ATP to the 4'-position of a tetraacyldisaccharide 1-phosphate intermediate (termed DS-1-P) to form tetraacyldisaccharide 1,4'-bis-phosphate (lipid IVA). The protein is Tetraacyldisaccharide 4'-kinase of Shewanella baltica (strain OS195).